The chain runs to 158 residues: Transcriptional repressor NrdR (158 aa).

Residues 3 to 34 fold into a zinc finger; that stretch reads CPYCQSEDTQVKDSRPAEDGAVIRRRRVCSVC. Residues 49 to 139 form the ATP-cone domain; it reads LMVVKKSGRR…VYRNFSKAVD (91 aa).

This sequence belongs to the NrdR family. Requires Zn(2+) as cofactor.

Functionally, negatively regulates transcription of bacterial ribonucleotide reductase nrd genes and operons by binding to NrdR-boxes. The chain is Transcriptional repressor NrdR from Brucella abortus (strain S19).